Here is a 262-residue protein sequence, read N- to C-terminus: Ribosomal RNA small subunit methyltransferase A (262 aa).

S-adenosyl-L-methionine-binding residues include N14, L16, G41, E62, D87, and N109.

It belongs to the class I-like SAM-binding methyltransferase superfamily. rRNA adenine N(6)-methyltransferase family. RsmA subfamily.

Its subcellular location is the cytoplasm. The enzyme catalyses adenosine(1518)/adenosine(1519) in 16S rRNA + 4 S-adenosyl-L-methionine = N(6)-dimethyladenosine(1518)/N(6)-dimethyladenosine(1519) in 16S rRNA + 4 S-adenosyl-L-homocysteine + 4 H(+). Functionally, specifically dimethylates two adjacent adenosines (A1518 and A1519) in the loop of a conserved hairpin near the 3'-end of 16S rRNA in the 30S particle. May play a critical role in biogenesis of 30S subunits. The sequence is that of Ribosomal RNA small subunit methyltransferase A from Francisella tularensis subsp. novicida (strain U112).